We begin with the raw amino-acid sequence, 1787 residues long: MRNSFPPSDGGRSTTDRRQQSFPSSSTNRYNSRSAQSSPPLNHCTTWNQQHSQYHNTNFPPNYRRDRAPSSGFSPPVTRARPNFIVQLLHPAAANSDTKLSKKQEIESIALLCEIPEESVHVPQFGCIAASFSFRQWVDARSAVVALWDYRLQGRHDFVPELIPNVVVPSDMDELKDRLRDLFSSHVLSLMENGQGVKKVRMEIDDKSRQVASFSSKRGLKFEVFEKKKALEAERDLVVNRLDEFNNAMKSILRYLIGQDGYEFDVDDEDDEDVAVFSLEGAYDWRRIHYLILRECRRLEDGLPIYAYRRQILKKIHCEQIMVLIGETGSGKSTQLVQFLADSGVAASESIVCTQPRKIAAMTLTDRVREESSGCYEENTVSCTPTFSSTEEISSKVVYMTDNCLLQHYMKDRSLSGISCVIIDEAHERSLNTDLLLALLRKLLSRRIDLRLVIMSATADANQLSQYLFDCGILHVNGRNFPVEIVYSPSGTEENSVVGRIASYAGDVVKMAVEIHKTEKEGTILAFLTSQAEVEWACERFVAPSAIALPLHGKLSFEEQFMVFQNYPGRRKVIFATNIAETSLTIPGVKYVIDSGMVKESKYEPRTGMSILKVCQVSQSSARQRAGRAGRTEPGRCYRLYSKTDFDSMNLNQEPEIRRVHLGVALLRMLALGIDNIAAFEFVDAPVPEAIAMAIQNLVQLGAVVEKNGVLELTQEGHCLVKLGLEPKLGKLILGCFRHRMGKEGIVLAAVMANASSIFCRVGNFDDKMKADRLKVQFCNDNGDLFTLLSVYKEWASLPRDRRNKWCWENSLNAKSMRRCEDTVKELEICIERELTLVSPSYWVWNPNEGTKHDKYLKMVILASLAENVAMYTGYDQLGYEVALTSQQVQLHPSCSLLAFGQKPSWVVFGELLSIVDQYLVCVTAFDFEALYMLDPPPPFDASQMDERRLRVKKVVGCSSTVLKRFCGKSNRSLLSIVSRARSLCSDERIGIQVDVDQNEIRLYASPLDMEKVSALVNDALECEKKWMRNECLEKYLFHGRGQIPIALFGSGAQIKHLEVDQRFLTVDVHYYGDDVVDDRELLTFLEKKIDGCICSIYKFAANKQDCDEKEKWGRITFLTPESAMKATEIQKFDFKGSVLKVFPSLSTGGGIFKMPYFSSVTAKIRWPRKESSGRGCLKCPSGDIHSILGDITSLEIGTNYVHIQRDQLSNDSILISGLGDLSEAEVLDVLEFRTQRRDLNFFIFRKKYSVQCPSPTACEEELHKRIFARMSAKNPEPNCVQVQVFEPKEDNYFMRALIKFDGRLHLEAAKALQELNGEVLPGCLPWQKIKCEQLFQSSIICSASIYNTVKRQLNVLLARFERQKGGECCLEPTHNGAYRVKITAYATRPVAEMRRELEELLRGKPINHPGFTPRVVQHLMSRDGINLMRKIQQETETYILLDRHNLTVRICGTSEKIAKAEQELVQSLMDYHESKQLEIHLRGPEIRPDLMKEVVKRFGPELQGIKEKVHGVDLKLNTRYHVIQVHGSKEMRQEVQKMVNELAREKSALGEKPDEIELECPICLSEVDDGYSLEGCSHLFCKACLLEQFEASMRNFDAFPILCSHIDCGAPIVVADMRALLSQEKLDELISASLSAFVTSSDGKLRFCSTPDCPSIYRVAGPQESGEPFICGACHSETCTRCHLEYHPLITCERYKKFKENPDLSLKDWAKGKDVKECPICKSTIEKTDGCNHLQCRCGKHICWTCLDVFTQAEPCYAHLRTIHGGIGLVELGVPEHPVAQPVHRL.

The N-terminal 33 residues, 1–33, are a transit peptide targeting the chloroplast; the sequence is MRNSFPPSDGGRSTTDRRQQSFPSSSTNRYNSR. The disordered stretch occupies residues 1 to 75; sequence MRNSFPPSDG…DRAPSSGFSP (75 aa). Residues 20–60 show a composition bias toward polar residues; the sequence is QSFPSSSTNRYNSRSAQSSPPLNHCTTWNQQHSQYHNTNFP. The Helicase ATP-binding domain maps to 313 to 477; that stretch reads LKKIHCEQIM…LFDCGILHVN (165 aa). Residue 326–333 participates in ATP binding; that stretch reads GETGSGKS. A DEAH box motif is present at residues 424–427; sequence DEAH. One can recognise a Helicase C-terminal domain in the interval 507–673; that stretch reads DVVKMAVEIH…VALLRMLALG (167 aa). Residues 1557–1764 form a TRIAD supradomain region; that stretch reads IELECPICLS…EPCYAHLRTI (208 aa). Positions 1561, 1564, 1577, 1579, 1582, 1585, 1604, 1609, 1649, 1654, 1672, 1675, 1680, 1683, 1688, 1693, 1719, and 1722 each coordinate Zn(2+). An RING-type 1 zinc finger spans residues 1561–1609; the sequence is CPICLSEVDDGYSLEGCSHLFCKACLLEQFEASMRNFDAFPILCSHIDC. The IBR-type zinc finger occupies 1628–1693; it reads DELISASLSA…HLEYHPLITC (66 aa). Residues 1719-1747 form an RING-type 2; atypical zinc finger; it reads CPICKSTIEKTDGCNHLQCRCGKHICWTC. C1732 is a catalytic residue. Positions 1737 and 1739 each coordinate Zn(2+).

The protein belongs to the DEAD box helicase family. DEAH subfamily.

It is found in the plastid. The protein resides in the chloroplast. It catalyses the reaction ATP + H2O = ADP + phosphate + H(+). This chain is ATP-dependent RNA helicase DEAH11, chloroplastic, found in Arabidopsis thaliana (Mouse-ear cress).